Here is a 436-residue protein sequence, read N- to C-terminus: Probable sodium/metabolite cotransporter BASS4, chloroplastic (436 aa).

The transit peptide at Met1 to Arg47 directs the protein to the chloroplast. 9 helical membrane-spanning segments follow: residues Phe109–Cys129, Ala131–Thr151, Ile157–Leu177, Leu195–Leu215, Leu225–Val245, Phe257–Gly277, Leu297–Val314, Val328–Ala348, and Pro403–Leu423.

It belongs to the bile acid:sodium symporter (BASS) (TC 2.A.28) family.

It localises to the membrane. It is found in the plastid. The protein resides in the chloroplast envelope. May function as sodium-coupled metabolite transporter across the chloroplast envelope. This chain is Probable sodium/metabolite cotransporter BASS4, chloroplastic (BASS4), found in Arabidopsis thaliana (Mouse-ear cress).